Reading from the N-terminus, the 244-residue chain is 14-3-3 protein beta/alpha-B (244 aa).

N-acetylmethionine is present on Met-1.

Belongs to the 14-3-3 family. In terms of assembly, homodimer, and heterodimer with other family members.

It localises to the cytoplasm. Functionally, adapter protein implicated in the regulation of a large spectrum of both general and specialized signaling pathways. Binds to a large number of partners, usually by recognition of a phosphoserine or phosphothreonine motif. Binding generally results in the modulation of the activity of the binding partner. This Xenopus laevis (African clawed frog) protein is 14-3-3 protein beta/alpha-B (ywhab-b).